The sequence spans 616 residues: Dihydroxy-acid dehydratase (616 aa).

Aspartate 81 is a binding site for Mg(2+). Cysteine 122 is a binding site for [2Fe-2S] cluster. Positions 123 and 124 each coordinate Mg(2+). The residue at position 124 (lysine 124) is an N6-carboxylysine. Cysteine 195 is a [2Fe-2S] cluster binding site. Mg(2+) is bound at residue glutamate 491. Residue serine 517 is the Proton acceptor of the active site.

It belongs to the IlvD/Edd family. In terms of assembly, homodimer. It depends on [2Fe-2S] cluster as a cofactor. Requires Mg(2+) as cofactor.

The catalysed reaction is (2R)-2,3-dihydroxy-3-methylbutanoate = 3-methyl-2-oxobutanoate + H2O. The enzyme catalyses (2R,3R)-2,3-dihydroxy-3-methylpentanoate = (S)-3-methyl-2-oxopentanoate + H2O. The protein operates within amino-acid biosynthesis; L-isoleucine biosynthesis; L-isoleucine from 2-oxobutanoate: step 3/4. It functions in the pathway amino-acid biosynthesis; L-valine biosynthesis; L-valine from pyruvate: step 3/4. Functions in the biosynthesis of branched-chain amino acids. Catalyzes the dehydration of (2R,3R)-2,3-dihydroxy-3-methylpentanoate (2,3-dihydroxy-3-methylvalerate) into 2-oxo-3-methylpentanoate (2-oxo-3-methylvalerate) and of (2R)-2,3-dihydroxy-3-methylbutanoate (2,3-dihydroxyisovalerate) into 2-oxo-3-methylbutanoate (2-oxoisovalerate), the penultimate precursor to L-isoleucine and L-valine, respectively. The chain is Dihydroxy-acid dehydratase from Serratia proteamaculans (strain 568).